The following is a 105-amino-acid chain: Protein yippee-like At4g27740 (105 aa).

The Yippee domain maps to 8–105 (PTYFCRNCEN…IEKLKLTKRY (98 aa)). The Zn(2+) site is built by C12, C15, C68, and C71.

It belongs to the yippee family.

The sequence is that of Protein yippee-like At4g27740 from Arabidopsis thaliana (Mouse-ear cress).